Consider the following 503-residue polypeptide: METLLEQQRRLHEERERLVKLMVDEHATKKPGEKERIHSEHRLKYLMELHHNSTSQLRDLYEDKDNERKAEIAALSGPNEFNEFYARLKQIKQFYKSHPAEVSVPLSVEFDEMIRVYNNPDDMSALVEFTDEEGGGRYLDLNECYELYLNLRSVEKLDYITYLMSFDHVFDIPRERKNREYRIYIETLNDYLHHFILRIQPLLDLEGELLKVELDFQRQWLMGTFPGFSIKETESALANTGAHLDLSAFSSWEELASLGLDRLKSALVALGLKCGGTLEERAQRLFSTKGKSTLDPALMAKKPSAKTASAQSREHERHKEIAQLEALLYKYADLLSEQRAATKENVQRKQARTGGERDDSDVEASESDNEDDPDADDVPYNPKNLPLGWDGKPIPYWLYKLHGLNISYNCEICGNFTYKGPKAFQRHFAEWRHAHGMRCLGIPNTAHFANVTQIEDAITLWEKLKSQKQSERWVADQEEEFEDSLGNVVNRKTFEDLKRQGLL.

Disordered stretches follow at residues 296–317 (PALM…EHER) and 341–384 (ATKE…NPKN). Residues 358–377 (DDSDVEASESDNEDDPDADD) show a composition bias toward acidic residues. 3 positions are modified to phosphoserine: serine 360, serine 365, and serine 367. A Matrin-type zinc finger spans residues 408-439 (YNCEICGNFTYKGPKAFQRHFAEWRHAHGMRC).

It belongs to the SF3A3 family. In terms of assembly, probable component of a the U2 small nuclear ribonucleoproteins complex (U2 snRNP). In terms of tissue distribution, ubiquitous. In ovaries and testes, it is expressed in all germ and somatic cells. Highly expressed in spermatogonias and spermatocytes. Highly expressed in the germ cells of larval testes, while it is weakly expressed in fat body cells, in polyploid nuclei of salivary glands, and in larval brain.

It localises to the nucleus. In terms of biological role, probable subunit of a splicing factor complex required for 'A' complex assembly formed by the stable binding of U2 snRNP to the branchpoint sequence (BPS) in pre-mRNA. Involved in male fertility. In Drosophila melanogaster (Fruit fly), this protein is Splicing factor 3A subunit 3 (noi).